The following is a 69-amino-acid chain: FMRFamide-like neuropeptides 24 (69 aa).

The signal sequence occupies residues 1-25 (MLSSRTSSIILILAILVAIMAVAQC). A propeptide spanning residues 26-51 (RNIQYDVEEMTPEAAFRYAQWGEIPH) is cleaved from the precursor. Phenylalanine amide is present on Phe64. A propeptide spanning residues 68–69 (SI) is cleaved from the precursor.

Belongs to the FARP (FMRFamide related peptide) family.

The protein localises to the secreted. Probable FMRFamide-like neuropeptides. Plays a role in behaviors associated with a sleep-like state induced by stress (SIS), acting in concert with the FMRFamide related peptide flp-13 and neuropeptide-like protein nlp-8. The protein is FMRFamide-like neuropeptides 24 of Caenorhabditis elegans.